The primary structure comprises 104 residues: L-rhamnose mutarotase (104 aa).

Position 18 (tyrosine 18) interacts with substrate. Histidine 22 functions as the Proton donor in the catalytic mechanism. Substrate is bound by residues tyrosine 41 and 76 to 77; that span reads WW.

This sequence belongs to the rhamnose mutarotase family. In terms of assembly, homodimer.

It is found in the cytoplasm. The catalysed reaction is alpha-L-rhamnose = beta-L-rhamnose. It functions in the pathway carbohydrate metabolism; L-rhamnose metabolism. In terms of biological role, involved in the anomeric conversion of L-rhamnose. The polypeptide is L-rhamnose mutarotase (Salmonella heidelberg (strain SL476)).